A 219-amino-acid chain; its full sequence is MALSWLQRVELALFAAAFLCGAVAAAAMTRTQGSFSGRCPLYGVATLNGSSLALSRPSAPSLCYFVAGASGLLALYCLLLLLFWIYSSCIEDSHRGAIGLRIALAISAIAVFLVLVSACILRFGTRSLCNSIISLNTTISCSEAQKIPWTPPGTALQFYSNLHNAETSSWVNLVLWCVVLVLQVVQWKSEATPYRPLERGDPEWSSETDALVGSRLSHS.

4 helical membrane passes run V9–T29, F65–I85, G96–V116, and T167–W187. The disordered stretch occupies residues E198–S219. Residues S206 and S214 each carry the phosphoserine modification.

Belongs to the TMEM179 family.

The protein resides in the membrane. The sequence is that of Transmembrane protein 179B (TMEM179B) from Homo sapiens (Human).